We begin with the raw amino-acid sequence, 935 residues long: Progesterone receptor (935 aa).

The tract at residues 1–50 is disordered; that stretch reads MTELKAKGPRAPHVAGSPSSPKVGSPLPCSQAAGPFPGSQTSDTLPEASA. The AF3; mediates transcriptional activation stretch occupies residues 1-164; that stretch reads MTELKAKGPR…PATQRVLSPL (164 aa). The tract at residues 1-568 is modulating, Pro-Rich; it reads MTELKAKGPR…YSFESLPQKI (568 aa). S20 carries the phosphoserine modification. The LXXL motif 1 signature appears at 55 to 59; it reads LDGLL. A disordered region spans residues 62–159; it reads RICQGQDPTD…DPPAAPATQR (98 aa). S81 bears the Phosphoserine mark. The LXXL motif 2 signature appears at 115 to 119; it reads LDTLW. S130 and S162 each carry phosphoserine. Positions 165–305 are mediates transcriptional transrepression; it reads MSRSGGKAGD…LATTVTDFIH (141 aa). The short motif at 183-187 is the Nuclear localization signal element; that stretch reads KVLPR. The tract at residues 185-252 is disordered; sequence LPRGLSPSRQ…ALGGAAAGGG (68 aa). A Phosphoserine modification is found at S190. The span at 191-203 shows a compositional bias: polar residues; sequence PSRQLLLPTSGSP. S213 carries the post-translational modification Phosphoserine. Residues 220–231 show a composition bias toward acidic residues; sequence EVEEEDGSESED. Residues 232–246 are compositionally biased toward low complexity; that stretch reads SAGPLLKGKPRALGG. At S294 the chain carries Phosphoserine; by MAPK1. The tract at residues 331–365 is disordered; that stretch reads GGAGAASAFAPPRSSPSASSTPVPGGDFPDCAYAP. Residues 335 to 356 show a composition bias toward low complexity; sequence AASAFAPPRSSPSASSTPVPGG. S345 carries the phosphoserine; by MAPK modification. K388 participates in a covalent cross-link: Glycyl lysine isopeptide (Lys-Gly) (interchain with G-Cter in SUMO); alternate. K388 participates in a covalent cross-link: Glycyl lysine isopeptide (Lys-Gly) (interchain with G-Cter in ubiquitin); alternate. Residue S400 is modified to Phosphoserine; by CDK2. The tract at residues 415-452 is disordered; that stretch reads PDFPLGPPPSLPPRAPPPRPGEAAVTAAPASASVSSAS. Positions 418 to 434 are enriched in pro residues; the sequence is PLGPPPSLPPRAPPPRP. Positions 435 to 452 are enriched in low complexity; sequence GEAAVTAAPASASVSSAS. Positions 456 to 548 are AF1; mediates transcriptional activation; sequence STLECILYKA…VYPPYLNYLR (93 aa). K533 participates in a covalent cross-link: Glycyl lysine isopeptide (Lys-Gly) (interchain with G-Cter in SUMO). 2 NR C4-type zinc fingers span residues 569 to 589 and 605 to 629; these read CLIC…CGSC and CAGR…LRKC. Residues 569–641 constitute a DNA-binding region (nuclear receptor); it reads CLICGDEASG…AGMVLGGRKF (73 aa). S678 is subject to Phosphoserine. The NR LBD domain maps to 681–915; sequence QDIQLIPPLI…EFPEMMSEVI (235 aa). The AF2; mediates transcriptional activation stretch occupies residues 689–935; that stretch reads LINLLLSIEP…MVKPLLFHKK (247 aa).

This sequence belongs to the nuclear hormone receptor family. As to quaternary structure, interacts with SMARD1 and UNC45A. Interacts with CUEDC2; the interaction promotes ubiquitination, decreases sumoylation, and represses transcriptional activity. Interacts with PIAS3; the interaction promotes sumoylation of PR in a hormone-dependent manner, inhibits DNA-binding, and alters nuclear export. Interacts with SP1; the interaction requires ligand-induced phosphorylation on Ser-344 by ERK1/2-MAPK. Interacts with PRMT2. Interacts with NCOA2 and NCOA1. Interacts with KLF9. Interacts with GTF2B. Post-translationally, phosphorylated on multiple serine sites. Several of these sites are hormone-dependent. Phosphorylation on Ser-294 is highly hormone-dependent and modulates ubiquitination and sumoylation on Lys-388. Phosphorylation on Ser-345 requires induction by hormone. Basal phosphorylation on Ser-81, Ser-162, Ser-190 and Ser-400 is increased in response to progesterone and can be phosphorylated in vitro by the CDK2-A1 complex. Increased levels of phosphorylation on Ser-400 also in the presence of EGF, heregulin, IGF, PMA and FBS. Phosphorylation at this site by CDK2 is ligand-independent, and increases nuclear translocation and transcriptional activity. Phosphorylation at Ser-162 and Ser-294, but not at Ser-190, is impaired during the G(2)/M phase of the cell cycle. Phosphorylation on Ser-345 by ERK1/2 MAPK is required for interaction with SP1. In terms of processing, sumoylation is hormone-dependent and represses transcriptional activity. Sumoylation on all three sites is enhanced by PIAS3. Desumoylated by SENP1. Sumoylation on Lys-388, the main site of sumoylation, is repressed by ubiquitination on the same site, and modulated by phosphorylation at Ser-294. Ubiquitination is hormone-dependent and represses sumoylation on the same site. Promoted by MAPK-mediated phosphorylation on Ser-294. Post-translationally, palmitoylated by ZDHHC7 and ZDHHC21. Palmitoylation is required for plasma membrane targeting and for rapid intracellular signaling via ERK and AKT kinases and cAMP generation.

The protein localises to the nucleus. Its subcellular location is the cytoplasm. The steroid hormones and their receptors are involved in the regulation of eukaryotic gene expression and affect cellular proliferation and differentiation in target tissues. Transcriptional activator of several progesteron-dependent promoters in a variety of cell types. Involved in activation of SRC-dependent MAPK signaling on hormone stimulation. The chain is Progesterone receptor (PGR) from Pithecia irrorata (Gray monk saki).